The following is a 207-amino-acid chain: Small ribosomal subunit protein uS4c (207 aa).

An S4 RNA-binding domain is found at 92 to 155 (MRLDNILFRL…TYQSILSKRI (64 aa)).

It belongs to the universal ribosomal protein uS4 family. In terms of assembly, part of the 30S ribosomal subunit. Contacts protein S5. The interaction surface between S4 and S5 is involved in control of translational fidelity.

It localises to the plastid. It is found in the chloroplast. Its function is as follows. One of the primary rRNA binding proteins, it binds directly to 16S rRNA where it nucleates assembly of the body of the 30S subunit. In terms of biological role, with S5 and S12 plays an important role in translational accuracy. The chain is Small ribosomal subunit protein uS4c (rps4) from Equisetum scirpoides (Dwarf-scouring rush).